A 189-amino-acid chain; its full sequence is Probable nicotinate-nucleotide adenylyltransferase (189 aa).

Belongs to the NadD family.

It catalyses the reaction nicotinate beta-D-ribonucleotide + ATP + H(+) = deamido-NAD(+) + diphosphate. The protein operates within cofactor biosynthesis; NAD(+) biosynthesis; deamido-NAD(+) from nicotinate D-ribonucleotide: step 1/1. Catalyzes the reversible adenylation of nicotinate mononucleotide (NaMN) to nicotinic acid adenine dinucleotide (NaAD). The protein is Probable nicotinate-nucleotide adenylyltransferase of Cereibacter sphaeroides (strain ATCC 17023 / DSM 158 / JCM 6121 / CCUG 31486 / LMG 2827 / NBRC 12203 / NCIMB 8253 / ATH 2.4.1.) (Rhodobacter sphaeroides).